The primary structure comprises 520 residues: Glutamate--cysteine ligase (520 aa).

This sequence belongs to the glutamate--cysteine ligase type 1 family. Type 1 subfamily.

The catalysed reaction is L-cysteine + L-glutamate + ATP = gamma-L-glutamyl-L-cysteine + ADP + phosphate + H(+). Its pathway is sulfur metabolism; glutathione biosynthesis; glutathione from L-cysteine and L-glutamate: step 1/2. This is Glutamate--cysteine ligase from Leptospira interrogans serogroup Icterohaemorrhagiae serovar Lai (strain 56601).